Reading from the N-terminus, the 952-residue chain is Translation initiation factor IF-2 (952 aa).

Disordered stretches follow at residues 74 to 95, 153 to 204, 230 to 256, and 273 to 319; these read QRRLSRLEEQSRKTYEKERQLK, AAQA…KEEP, MHSPFDRSSEAERKKKNRKKNFKEQAD, and DEKG…DVND. The span at 153 to 168 shows a compositional bias: low complexity; it reads AAQADQTDQTDQTDQA. Residues 232-242 show a composition bias toward basic and acidic residues; that stretch reads SPFDRSSEAER. Low complexity predominate over residues 286-303; the sequence is PGETNAATPAGTASTAGA. The region spanning 449–619 is the tr-type G domain; that stretch reads IRPPVITIMG…LAEAEIRELK (171 aa). The segment at 458–465 is G1; it reads GHVDHGKT. A GTP-binding site is contributed by 458–465; sequence GHVDHGKT. A G2 region spans residues 483-487; that stretch reads GITQH. The segment at 505–508 is G3; sequence DTPG. GTP contacts are provided by residues 505 to 509 and 559 to 562; these read DTPGH and NKVD. The G4 stretch occupies residues 559-562; sequence NKVD. A G5 region spans residues 595-597; the sequence is SAK.

The protein belongs to the TRAFAC class translation factor GTPase superfamily. Classic translation factor GTPase family. IF-2 subfamily.

It localises to the cytoplasm. In terms of biological role, one of the essential components for the initiation of protein synthesis. Protects formylmethionyl-tRNA from spontaneous hydrolysis and promotes its binding to the 30S ribosomal subunits. Also involved in the hydrolysis of GTP during the formation of the 70S ribosomal complex. The chain is Translation initiation factor IF-2 from Chlorobium limicola (strain DSM 245 / NBRC 103803 / 6330).